Here is a 122-residue protein sequence, read N- to C-terminus: Large ribosomal subunit protein uL18 (122 aa).

Belongs to the universal ribosomal protein uL18 family. In terms of assembly, part of the 50S ribosomal subunit; part of the 5S rRNA/L5/L18/L25 subcomplex. Contacts the 5S and 23S rRNAs.

In terms of biological role, this is one of the proteins that bind and probably mediate the attachment of the 5S RNA into the large ribosomal subunit, where it forms part of the central protuberance. The sequence is that of Large ribosomal subunit protein uL18 from Geotalea uraniireducens (strain Rf4) (Geobacter uraniireducens).